The following is a 396-amino-acid chain: Enoyl-[acyl-carrier-protein] reductase [NADH] (396 aa).

NAD(+)-binding positions include Gly48–Tyr53, Phe74–Glu75, Asp111–Ala112, and Leu139–Ala140. Tyr225 contributes to the substrate binding site. The Proton donor role is filled by Tyr235. Residues Lys244 and Val273–Thr275 contribute to the NAD(+) site.

It belongs to the TER reductase family. As to quaternary structure, monomer.

It carries out the reaction a 2,3-saturated acyl-[ACP] + NAD(+) = a (2E)-enoyl-[ACP] + NADH + H(+). Its pathway is lipid metabolism; fatty acid biosynthesis. Involved in the final reduction of the elongation cycle of fatty acid synthesis (FAS II). Catalyzes the reduction of a carbon-carbon double bond in an enoyl moiety that is covalently linked to an acyl carrier protein (ACP). The polypeptide is Enoyl-[acyl-carrier-protein] reductase [NADH] (Teredinibacter turnerae (strain ATCC 39867 / T7901)).